Here is a 300-residue protein sequence, read N- to C-terminus: Transacylase cctO (300 aa).

Residues 52–72 (IVYVSLTFFVVSIGLNFILAI) traverse the membrane as a helical segment. 2 short sequence motifs (HXXHC) span residues 185-189 (HQLGC) and 225-229 (HVDQC). N-linked (GlcNAc...) asparagine glycosylation is present at Asn-270.

Belongs to the ustYa family.

Its subcellular location is the membrane. Its pathway is mycotoxin biosynthesis. Transacylase; part of the gene cluster that mediates the biosynthesis of the mycotoxin cyclochlorotine, a hepatotoxic and carcinogenic cyclic chlorinated pentapeptide. Within the pathway, cctO catalyzes the intramolecular O,N-transacylation from isocyclochlorotine to cyclochlorotine. The NRPS cctN initially catalyzes the condensation of L-serine (Ser), Pro, L-2-aminobutyrate (2Abu), Ser, and beta-Phe in this order to produce isocyclotine. After the dichlorination of Pro2 catalyzed by cctP2 to produce isocyclochlorotine, the cctO-mediated transacylation of isocyclochlorotine can furnish cyclochlorotine. The subsequent hydroxylation of cyclochlorotine by cctR yields hydroxycyclochlorotine as the final product. CctP1 probably acts as a phenylalanine aminomutase and provides the uncommon building block beta-Phe. Furthermore, 2Abu can be synthesized from threonine by one of the threonine dehydratases and transaminases localized outside of the cluster. The functions of the remaining proteins encoded by the cluster, cctM and cctT, have not been identified yet. The sequence is that of Transacylase cctO from Talaromyces islandicus (Penicillium islandicum).